Here is a 452-residue protein sequence, read N- to C-terminus: MAAPSAGSWSTFQHKELMAADRGRRILGVCGMHPHHQETLKKNRVVLAKQLLLSELLEHLLEKDIITLEMRELIQAKVGSFSQNVELLNLLPKRGPQAFDAFCEALRETKQGHLEDMLLTTLSGLQHVLPPLSCDYDLSLPFPVCESCPLYKKLRLSTDTVEHSLDNKDGPVCLQVKPCTPEFYQTHFQLAYRLQSRPRGLALVLSNVHFTGEKELEFRSGGDVDHSTLVTLFKLLGYDVHVLCDQTAQEMQEKLQNFAQLPAHRVTDSCIVALLSHGVEGAIYGVDGKLLQLQEVFQLFDNANCPSLQNKPKMFFIQACRGDETDRGVDQQDGKNHAGSPGCEESDAGKEKLPKMRLPTRSDMICGYACLKGTAAMRNTKRGSWYIEALAQVFSERACDMHVADMLVKVNALIKDREGYAPGTEFHRCKEMSEYCSTLCRHLYLFPGHPPT.

Alanine 2 is subject to N-acetylalanine. A propeptide spanning residues 2–169 (AAPSAGSWST…TVEHSLDNKD (168 aa)) is cleaved from the precursor. The CARD domain occupies 32 to 121 (MHPHHQETLK…GHLEDMLLTT (90 aa)). Serine 157 is subject to Phosphoserine. Active-site residues include histidine 277 and cysteine 320. Residues 326 to 333 (DRGVDQQD) constitute a propeptide that is removed on maturation. A compositionally biased stretch (basic and acidic residues) spans 327–336 (RGVDQQDGKN). Residues 327 to 354 (RGVDQQDGKNHAGSPGCEESDAGKEKLP) are disordered. Serine 340 bears the Phosphoserine mark.

Belongs to the peptidase C14A family. As to quaternary structure, heterotetramer that consists of two anti-parallel arranged heterodimers, each one formed by a p18 subunit and a p12 subunit. Forms a complex named the PIDDosome with PIDD1 and CRADD. Interacts with NOL3 (via CARD domain); inhibits CASP2 activity in a phosphorylation-dependent manner. Post-translationally, the mature protease can process its own propeptide, but not that of other caspases. As to expression, expressed at higher levels in the embryonic lung, liver and kidney than in the heart and brain. In adults, higher level expression is seen in the placenta, lung, kidney, and pancreas than in the heart, brain, liver and skeletal muscle.

It catalyses the reaction Strict requirement for an Asp residue at P1, with 316-Asp being essential for proteolytic activity and has a preferred cleavage sequence of Val-Asp-Val-Ala-Asp-|-.. Is a regulator of the cascade of caspases responsible for apoptosis execution. Might function by either activating some proteins required for cell death or inactivating proteins necessary for cell survival. Associates with PIDD1 and CRADD to form the PIDDosome, a complex that activates CASP2 and triggers apoptosis in response to genotoxic stress. Functionally, acts as a positive regulator of apoptosis. In terms of biological role, acts as a negative regulator of apoptosis. Its function is as follows. May function as an endogenous apoptosis inhibitor that antagonizes caspase activation and cell death. The sequence is that of Caspase-2 (CASP2) from Homo sapiens (Human).